We begin with the raw amino-acid sequence, 907 residues long: Alanine--tRNA ligase (907 aa).

Zn(2+) is bound by residues His602, His606, Cys706, and His710.

The protein belongs to the class-II aminoacyl-tRNA synthetase family. Requires Zn(2+) as cofactor.

The protein localises to the cytoplasm. The catalysed reaction is tRNA(Ala) + L-alanine + ATP = L-alanyl-tRNA(Ala) + AMP + diphosphate. Its function is as follows. Catalyzes the attachment of alanine to tRNA(Ala) in a two-step reaction: alanine is first activated by ATP to form Ala-AMP and then transferred to the acceptor end of tRNA(Ala). Also edits incorrectly charged Ser-tRNA(Ala) and Gly-tRNA(Ala) via its editing domain. In Thermofilum pendens (strain DSM 2475 / Hrk 5), this protein is Alanine--tRNA ligase.